Reading from the N-terminus, the 114-residue chain is Large ribosomal subunit protein bL19 (114 aa).

The protein belongs to the bacterial ribosomal protein bL19 family.

Functionally, this protein is located at the 30S-50S ribosomal subunit interface and may play a role in the structure and function of the aminoacyl-tRNA binding site. The sequence is that of Large ribosomal subunit protein bL19 from Clavibacter sepedonicus (Clavibacter michiganensis subsp. sepedonicus).